Here is a 149-residue protein sequence, read N- to C-terminus: MAFHSLLLLCLAGLVFLSEAGPVAHGAEDSKCPLMVKVLDSVRGSPAVNVDVKVFKKTEEQTWELFASGKTNNNGEIHELTSDDQFGEGLYKVEFDTVSYWKTFGISPFHEYADVVFTANDAGHRHYTIAAQLSPFSFSTTAVVSNPKD.

The N-terminal stretch at Met-1–Ala-20 is a signal peptide. A Sulfocysteine modification is found at Cys-32. Residue Lys-37 coordinates L-thyroxine. Glu-64 is modified (4-carboxyglutamate). Residues Glu-76 and Ser-139 each contribute to the L-thyroxine site.

This sequence belongs to the transthyretin family. Homotetramer. Dimer of dimers. In the homotetramer, subunits assemble around a central channel that can accommodate two ligand molecules. Interacts with RBP4. Sulfonation of the reactive cysteine Cys-32 enhances the stability of the native conformation of TTR, avoiding misassembly of the protein leading to amyloid formation. As to expression, highly expressed in the choroid plexus.

The protein resides in the secreted. Thyroid hormone-binding protein. Probably transports thyroxine from the bloodstream to the brain. The chain is Transthyretin (TTR) from Sminthopsis macroura (Stripe-faced dunnart).